The primary structure comprises 254 residues: 4-hydroxy-tetrahydrodipicolinate reductase (254 aa).

Residues 10-15 (GATGKV) and 101-103 (GTT) contribute to the NAD(+) site. H157 acts as the Proton donor/acceptor in catalysis. H158 provides a ligand contact to (S)-2,3,4,5-tetrahydrodipicolinate. The Proton donor role is filled by K161. 167–168 (GT) provides a ligand contact to (S)-2,3,4,5-tetrahydrodipicolinate.

Belongs to the DapB family.

It is found in the cytoplasm. The catalysed reaction is (S)-2,3,4,5-tetrahydrodipicolinate + NAD(+) + H2O = (2S,4S)-4-hydroxy-2,3,4,5-tetrahydrodipicolinate + NADH + H(+). It carries out the reaction (S)-2,3,4,5-tetrahydrodipicolinate + NADP(+) + H2O = (2S,4S)-4-hydroxy-2,3,4,5-tetrahydrodipicolinate + NADPH + H(+). Its pathway is amino-acid biosynthesis; L-lysine biosynthesis via DAP pathway; (S)-tetrahydrodipicolinate from L-aspartate: step 4/4. Catalyzes the conversion of 4-hydroxy-tetrahydrodipicolinate (HTPA) to tetrahydrodipicolinate. The polypeptide is 4-hydroxy-tetrahydrodipicolinate reductase (Symbiobacterium thermophilum (strain DSM 24528 / JCM 14929 / IAM 14863 / T)).